Consider the following 1079-residue polypeptide: Capping protein inhibiting regulator of actin dynamics (1079 aa).

Residues 1-11 (MSQENVSDKVR) show a composition bias toward basic and acidic residues. Disordered regions lie at residues 1-293 (MSQE…EEER), 308-327 (ERKR…AEKR), 341-383 (EHRI…EWKR), 420-453 (PVTP…PTLS), 493-522 (EGKK…VFES), 606-639 (IFGQ…VQSR), and 658-1054 (PSFL…TTQV). Acidic residues predominate over residues 36–45 (DEGSSDEEEV). A compositionally biased stretch (basic and acidic residues) spans 64–76 (SAKEKSVSHDTVQ). The segment covering 115 to 134 (AKHKLSVKPKNQRVSRKHRR) has biased composition (basic residues). Acidic residues predominate over residues 140–158 (HEDDFSEIQEEFEKDEEVF). The segment covering 159–293 (DSSREDYGII…EERKRAEEER (135 aa)) has biased composition (basic and acidic residues). Residues 420-434 (PVTPATGQQGETTAE) are compositionally biased toward polar residues. Polar residues predominate over residues 670–682 (PKSQRSESGSPIQ). Positions 684 to 695 (ESEDSDTKDEDG) are enriched in acidic residues. Over residues 756–781 (DNSTLSEKSSPISPQQENIEFQTTVA) the composition is skewed to polar residues. 2 stretches are compositionally biased toward basic and acidic residues: residues 896 to 930 (WREK…DKET) and 944 to 983 (GFRE…EDKG). The segment covering 984–993 (NGSSSIISKH) has biased composition (polar residues). The span at 994 to 1016 (QTADENKRPDTLLARFERRDNLK) shows a compositional bias: basic and acidic residues. Polar residues predominate over residues 1020–1033 (TLPSSVTVEITDST).

In terms of assembly, directly interacts with actin-capping proteins; this interaction decreases the binding of capping proteins to actin.

The protein resides in the cytoplasm. Its subcellular location is the cytosol. In terms of biological role, involved in epithelial cell integrity by acting on the maintenance of the actin cytoskeleton. Positively regulates the actin polymerization, by inhibiting the interaction of actin-capping proteins with actin. The polypeptide is Capping protein inhibiting regulator of actin dynamics (crad) (Danio rerio (Zebrafish)).